A 1465-amino-acid chain; its full sequence is DNA polymerase III PolC-type (1465 aa).

Residues 431–583 (DVETTGLSAM…YDAEATGRLL (153 aa)) enclose the Exonuclease domain.

Belongs to the DNA polymerase type-C family. PolC subfamily.

It is found in the cytoplasm. It catalyses the reaction DNA(n) + a 2'-deoxyribonucleoside 5'-triphosphate = DNA(n+1) + diphosphate. Functionally, required for replicative DNA synthesis. This DNA polymerase also exhibits 3' to 5' exonuclease activity. This Streptococcus pyogenes protein is DNA polymerase III PolC-type.